A 291-amino-acid polypeptide reads, in one-letter code: Trimeric intracellular cation channel type B (291 aa).

The Lumenal segment spans residues 1–19 (MDSPWDELALAFSRTSMFP). The chain crosses the membrane as a helical span at residues 20–33 (FFDIAHYLVSVMAV). Topologically, residues 34 to 50 (KRQPGAAALAWKNPISS) are cytoplasmic. The chain crosses the membrane as a helical span at residues 51–70 (WFTAMLHCFGGGILSCLLLA). The Lumenal portion of the chain corresponds to 71 to 82 (EPPLKFLANHTN). Residues 83-99 (ILLASSIWYITFFCPHD) traverse the membrane as a helical segment. Residues 100 to 104 (LVSQG) are Cytoplasmic-facing. The chain crosses the membrane as a helical span at residues 105–121 (YSYLPVQLLASGMKEVT). A 1,2-diacyl-sn-glycero-3-phospho-(1D-myo-inositol-4,5-bisphosphate) contacts are provided by lysine 118 and arginine 122. Topologically, residues 122–139 (RTWKIVGGVTHANSYYKN) are lumenal. Residues 140–156 (GWIVMIAIGWARGAGGT) traverse the membrane as a helical segment. Residues 157 to 179 (IITNFERLVKGDWKPEGDEWLKM) lie on the Cytoplasmic side of the membrane. Residues 180 to 195 (SYPAKVTLLGSVIFTF) traverse the membrane as a helical segment. Residues 196-207 (QHTQHLAISKHN) lie on the Lumenal side of the membrane. Residues 208–227 (LMFLYTIFIVATKITMMTTQ) traverse the membrane as a helical segment. The Cytoplasmic portion of the chain corresponds to 228–291 (TSTMTFAPFE…VKKKHTKKNE (64 aa)). Residues 256-291 (KKSEAKSPSNGVGSLASKPVDVASDNVKKKHTKKNE) form a disordered region. At serine 262 the chain carries Phosphoserine.

It belongs to the TMEM38 family. Homotrimer; conformation seems to be controled by binding to diacylglycerol (DAG).

Its subcellular location is the endoplasmic reticulum membrane. It carries out the reaction K(+)(in) = K(+)(out). Its activity is regulated as follows. Channel activity is activated by increased cytosolic Ca(2+) levels and blocked by luminal high Ca(2+) levels. In terms of biological role, intracellular monovalent cation channel required for maintenance of rapid intracellular calcium release. Acts as a potassium counter-ion channel that functions in synchronization with calcium release from intracellular stores. Activated by increased cytosolic Ca(2+) levels. The protein is Trimeric intracellular cation channel type B of Homo sapiens (Human).